The following is a 222-amino-acid chain: 2-C-methyl-D-erythritol 4-phosphate cytidylyltransferase (222 aa).

This sequence belongs to the IspD/TarI cytidylyltransferase family. IspD subfamily.

The enzyme catalyses 2-C-methyl-D-erythritol 4-phosphate + CTP + H(+) = 4-CDP-2-C-methyl-D-erythritol + diphosphate. It participates in isoprenoid biosynthesis; isopentenyl diphosphate biosynthesis via DXP pathway; isopentenyl diphosphate from 1-deoxy-D-xylulose 5-phosphate: step 2/6. In terms of biological role, catalyzes the formation of 4-diphosphocytidyl-2-C-methyl-D-erythritol from CTP and 2-C-methyl-D-erythritol 4-phosphate (MEP). The chain is 2-C-methyl-D-erythritol 4-phosphate cytidylyltransferase from Thermotoga petrophila (strain ATCC BAA-488 / DSM 13995 / JCM 10881 / RKU-1).